The primary structure comprises 152 residues: Clitocypin-5 (152 aa).

In terms of assembly, homodimer.

Functionally, binds and inhibits cysteine proteinases. Inhibits most strongly papain and cathepsin L, more weakly bromelain and cathepsin B while it is completely ineffective against cathepsin H. This chain is Clitocypin-5 (clt5), found in Clitocybe nebularis (Clouded agaric).